The primary structure comprises 281 residues: Putative rRNA methyltransferase YqxC (281 aa).

Positions 6-67 (ERLDVLLVER…NPLRYVSRGG (62 aa)) constitute an S4 RNA-binding domain.

The protein belongs to the TlyA family.

This is Putative rRNA methyltransferase YqxC (yqxC) from Bacillus subtilis (strain 168).